The chain runs to 264 residues: E3 ubiquitin-protein ligase MARCHF8 (264 aa).

The tract at residues 15–47 (LGHSVSRSSNISKAGSPTSVSAPSSFPRTSVTP) is disordered. Over residues 17 to 47 (HSVSRSSNISKAGSPTSVSAPSSFPRTSVTP) the composition is skewed to polar residues. The RING-CH-type zinc-finger motif lies at 45–106 (VTPSSQDICR…ELCKFEFIME (62 aa)). The Zn(2+) site is built by cysteine 53, cysteine 56, cysteine 70, cysteine 72, histidine 80, cysteine 83, cysteine 96, and cysteine 99. The next 2 helical transmembrane spans lie at 130–150 (CSVTFHVIAITCVVWSLYVLI) and 170–190 (FWTKLVVVAIGFTGGLLFMYV).

The protein localises to the cytoplasmic vesicle membrane. It localises to the lysosome membrane. Its subcellular location is the early endosome membrane. It catalyses the reaction S-ubiquitinyl-[E2 ubiquitin-conjugating enzyme]-L-cysteine + [acceptor protein]-L-lysine = [E2 ubiquitin-conjugating enzyme]-L-cysteine + N(6)-ubiquitinyl-[acceptor protein]-L-lysine.. It participates in protein modification; protein ubiquitination. Its function is as follows. E3 ubiquitin-protein ligase that mediates ubiquitination of cd86 and MHC class II proteins, such as hla-dr alpha and beta, and promotes their subsequent endocytosis and sorting to lysosomes via multivesicular bodies. The protein is E3 ubiquitin-protein ligase MARCHF8 (marchf8) of Xenopus tropicalis (Western clawed frog).